The sequence spans 201 residues: LexA repressor (201 aa).

The H-T-H motif DNA-binding region spans 28–48 (RAEIANQLGFRSANAAEEHLK). Active-site for autocatalytic cleavage activity residues include Ser118 and Lys155.

The protein belongs to the peptidase S24 family. As to quaternary structure, homodimer.

The catalysed reaction is Hydrolysis of Ala-|-Gly bond in repressor LexA.. Its function is as follows. Represses a number of genes involved in the response to DNA damage (SOS response), including recA and lexA. In the presence of single-stranded DNA, RecA interacts with LexA causing an autocatalytic cleavage which disrupts the DNA-binding part of LexA, leading to derepression of the SOS regulon and eventually DNA repair. This Saccharophagus degradans (strain 2-40 / ATCC 43961 / DSM 17024) protein is LexA repressor.